The chain runs to 863 residues: uncharacterized protein (863 aa).

The first 29 residues, 1-29 (MHQSGSVSLCRSAISVLVATALYSPIALA), serve as a signal peptide directing secretion. An Autotransporter domain is found at 595–863 (GVSYDTAMWS…NTQAGVVWTF (269 aa)).

It is found in the cell outer membrane. This is an uncharacterized protein from Escherichia coli (strain K12).